The sequence spans 273 residues: Type III pantothenate kinase (273 aa).

Residue D7–K14 participates in ATP binding. Substrate contacts are provided by residues F119 and G124–R127. The active-site Proton acceptor is D126. D146 lines the K(+) pocket. T149 is an ATP binding site. T206 is a substrate binding site.

This sequence belongs to the type III pantothenate kinase family. In terms of assembly, homodimer. The cofactor is NH4(+). It depends on K(+) as a cofactor.

The protein localises to the cytoplasm. It catalyses the reaction (R)-pantothenate + ATP = (R)-4'-phosphopantothenate + ADP + H(+). It functions in the pathway cofactor biosynthesis; coenzyme A biosynthesis; CoA from (R)-pantothenate: step 1/5. In terms of biological role, catalyzes the phosphorylation of pantothenate (Pan), the first step in CoA biosynthesis. The protein is Type III pantothenate kinase of Rhodopirellula baltica (strain DSM 10527 / NCIMB 13988 / SH1).